Here is a 140-residue protein sequence, read N- to C-terminus: Large ribosomal subunit protein uL11 (140 aa).

This sequence belongs to the universal ribosomal protein uL11 family. Part of the ribosomal stalk of the 50S ribosomal subunit. Interacts with L10 and the large rRNA to form the base of the stalk. L10 forms an elongated spine to which L12 dimers bind in a sequential fashion forming a multimeric L10(L12)X complex. One or more lysine residues are methylated.

Functionally, forms part of the ribosomal stalk which helps the ribosome interact with GTP-bound translation factors. This is Large ribosomal subunit protein uL11 from Halothermothrix orenii (strain H 168 / OCM 544 / DSM 9562).